We begin with the raw amino-acid sequence, 438 residues long: Serine--tRNA ligase (438 aa).

243 to 245 (TAE) contacts L-serine. 274–276 (RSE) is a binding site for ATP. Residue glutamate 297 participates in L-serine binding. An ATP-binding site is contributed by 361–364 (EISS). Residue serine 396 participates in L-serine binding.

It belongs to the class-II aminoacyl-tRNA synthetase family. Type-1 seryl-tRNA synthetase subfamily. Homodimer. The tRNA molecule binds across the dimer.

Its subcellular location is the cytoplasm. The catalysed reaction is tRNA(Ser) + L-serine + ATP = L-seryl-tRNA(Ser) + AMP + diphosphate + H(+). It carries out the reaction tRNA(Sec) + L-serine + ATP = L-seryl-tRNA(Sec) + AMP + diphosphate + H(+). The protein operates within aminoacyl-tRNA biosynthesis; selenocysteinyl-tRNA(Sec) biosynthesis; L-seryl-tRNA(Sec) from L-serine and tRNA(Sec): step 1/1. Catalyzes the attachment of serine to tRNA(Ser). Is also able to aminoacylate tRNA(Sec) with serine, to form the misacylated tRNA L-seryl-tRNA(Sec), which will be further converted into selenocysteinyl-tRNA(Sec). The protein is Serine--tRNA ligase of Ralstonia pickettii (strain 12J).